Consider the following 210-residue polypeptide: Uridine kinase (210 aa).

12-19 is an ATP binding site; sequence GGSGGGKT.

Belongs to the uridine kinase family.

The protein localises to the cytoplasm. The enzyme catalyses uridine + ATP = UMP + ADP + H(+). It carries out the reaction cytidine + ATP = CMP + ADP + H(+). It functions in the pathway pyrimidine metabolism; CTP biosynthesis via salvage pathway; CTP from cytidine: step 1/3. It participates in pyrimidine metabolism; UMP biosynthesis via salvage pathway; UMP from uridine: step 1/1. In Streptococcus gordonii (strain Challis / ATCC 35105 / BCRC 15272 / CH1 / DL1 / V288), this protein is Uridine kinase.